The chain runs to 232 residues: MAIQHRDPRGGGGSRDARTNRRIKAREVRVIGAEGEQLGVLPIDQALARAQELGMDLVEVSPMAKPPVCKIMDYGRFKYLEKKKQNEAKKKQVVVQLKEVKLRPRTEEHDYDTKIKKVRAFLGEANKARITVMFRGREMSHRELGQKVLQRVIEDLRDVAVIESAPRMEGRQMFMILAPNPKMLQSQRDKAKAAAAAAPAAAPAAGAPAPTPAPAPAAPAPAPAAADPAAQR.

Disordered stretches follow at residues Met-1–Arg-21 and Leu-184–Arg-232. Residues Ala-193 to Pro-208 are compositionally biased toward low complexity. Residues Ala-209–Ala-222 show a composition bias toward pro residues. Positions Pro-223–Arg-232 are enriched in low complexity.

It belongs to the IF-3 family. As to quaternary structure, monomer.

The protein localises to the cytoplasm. Functionally, IF-3 binds to the 30S ribosomal subunit and shifts the equilibrium between 70S ribosomes and their 50S and 30S subunits in favor of the free subunits, thus enhancing the availability of 30S subunits on which protein synthesis initiation begins. This chain is Translation initiation factor IF-3, found in Anaeromyxobacter sp. (strain K).